Here is a 105-residue protein sequence, read N- to C-terminus: Probable tetrachloroethene reductive dehalogenase membrane anchor protein (105 aa).

The next 3 membrane-spanning stretches (helical) occupy residues 3 to 23 (IYDV…QYGI), 35 to 55 (IPLQ…LAWG), and 66 to 86 (AIGM…IITY).

It belongs to the PceB family.

The protein localises to the cell membrane. In terms of biological role, may act as a membrane anchor for the tetrachloroethene reductive dehalogenase PceA. The sequence is that of Probable tetrachloroethene reductive dehalogenase membrane anchor protein from Desulfitobacterium hafniense (Desulfitobacterium frappieri).